The primary structure comprises 75 residues: Salivary glue protein Sgs-8 (75 aa).

The first 24 residues, 1–24 (MKLLVVAVIACIMLIGFADPASGC), serve as a signal peptide directing secretion.

The sequence is that of Salivary glue protein Sgs-8 (Sgs8) from Drosophila melanogaster (Fruit fly).